Reading from the N-terminus, the 238-residue chain is Protein TIFY 3A (238 aa).

Positions 39–74 (EPDASTQLTIIFGGSCRVFNGVPAQKVQEIIRIAFA) constitute a Tify 1 domain. The Jas 1 motif lies at 101–120 (PIARRRSLQRFLEKRRDRST). Positions 103–110 (ARRRSLQR) match the Nuclear localization signal 1 motif. Positions 125–160 (SMILPSQLTIIFGGSFSVFDGIPAEKVQEILHIAAA) constitute a Tify 2 domain. Residues 197 to 222 (PIARRRSLQRFFEKRRHRFVHTKPYS) carry the Jas 2 motif. A Nuclear localization signal 2 motif is present at residues 199–206 (ARRRSLQR). Residues 219-238 (KPYSATTSEADKNETSPIVT) form a disordered region.

The protein belongs to the TIFY/JAZ family. Interacts with MYC2, MYB21, MYB24, AFPH2/NINJA, TIFY10A/JAZ1, TIFY10B/JAZ2, TIFY6B/JAZ3, TIFY6A/JAZ4, TIFY7/JAZ9 and TIFY9/JAZ10. Ubiquitinated. Targeted for degradation by the SCF(COI1) E3 ubiquitin ligase-proteasome pathway during jasmonate signaling.

It is found in the nucleus. In terms of biological role, repressor of jasmonate (JA) responses. Targets MYC2, MYC3 and MYC4 that are JA-dependent transcription activators. In Arabidopsis thaliana (Mouse-ear cress), this protein is Protein TIFY 3A (TIFY3A).